Consider the following 79-residue polypeptide: Acyl carrier protein (79 aa).

In terms of domain architecture, Carrier spans 2–77; that stretch reads SDVAERVKKI…DAVNFLEKAT (76 aa). An O-(pantetheine 4'-phosphoryl)serine modification is found at serine 37.

Belongs to the acyl carrier protein (ACP) family. In terms of processing, 4'-phosphopantetheine is transferred from CoA to a specific serine of apo-ACP by AcpS. This modification is essential for activity because fatty acids are bound in thioester linkage to the sulfhydryl of the prosthetic group.

The protein localises to the cytoplasm. It functions in the pathway lipid metabolism; fatty acid biosynthesis. Carrier of the growing fatty acid chain in fatty acid biosynthesis. The sequence is that of Acyl carrier protein from Methylocella silvestris (strain DSM 15510 / CIP 108128 / LMG 27833 / NCIMB 13906 / BL2).